We begin with the raw amino-acid sequence, 287 residues long: Elongation factor Ts (287 aa).

The segment at 80 to 83 (TDFL) is involved in Mg(2+) ion dislocation from EF-Tu.

This sequence belongs to the EF-Ts family.

It localises to the cytoplasm. Its function is as follows. Associates with the EF-Tu.GDP complex and induces the exchange of GDP to GTP. It remains bound to the aminoacyl-tRNA.EF-Tu.GTP complex up to the GTP hydrolysis stage on the ribosome. In Ectopseudomonas mendocina (strain ymp) (Pseudomonas mendocina), this protein is Elongation factor Ts.